A 218-amino-acid polypeptide reads, in one-letter code: Elongation factor Ts (218 aa).

Residues T82–V85 are involved in Mg(2+) ion dislocation from EF-Tu.

The protein belongs to the EF-Ts family.

The protein localises to the cytoplasm. Its function is as follows. Associates with the EF-Tu.GDP complex and induces the exchange of GDP to GTP. It remains bound to the aminoacyl-tRNA.EF-Tu.GTP complex up to the GTP hydrolysis stage on the ribosome. The chain is Elongation factor Ts from Prochlorococcus marinus (strain MIT 9313).